We begin with the raw amino-acid sequence, 312 residues long: Acetaldehyde dehydrogenase (312 aa).

11–14 contributes to the NAD(+) binding site; the sequence is SGNI. The active-site Acyl-thioester intermediate is C129. Residues 160 to 168 and N287 contribute to the NAD(+) site; that span reads SAGPGTRAN.

It belongs to the acetaldehyde dehydrogenase family.

The catalysed reaction is acetaldehyde + NAD(+) + CoA = acetyl-CoA + NADH + H(+). The protein is Acetaldehyde dehydrogenase (xylQ) of Sphingobium yanoikuyae (Sphingomonas yanoikuyae).